The chain runs to 602 residues: Elongation factor 4 (602 aa).

Residues 6–188 (DHIRNFSIVA…AIVNKLPAPK (183 aa)) form the tr-type G domain. GTP is bound by residues 18-23 (DHGKST) and 135-138 (NKID).

Belongs to the TRAFAC class translation factor GTPase superfamily. Classic translation factor GTPase family. LepA subfamily.

The protein localises to the cell inner membrane. It catalyses the reaction GTP + H2O = GDP + phosphate + H(+). In terms of biological role, required for accurate and efficient protein synthesis under certain stress conditions. May act as a fidelity factor of the translation reaction, by catalyzing a one-codon backward translocation of tRNAs on improperly translocated ribosomes. Back-translocation proceeds from a post-translocation (POST) complex to a pre-translocation (PRE) complex, thus giving elongation factor G a second chance to translocate the tRNAs correctly. Binds to ribosomes in a GTP-dependent manner. The chain is Elongation factor 4 from Brucella suis (strain ATCC 23445 / NCTC 10510).